A 248-amino-acid polypeptide reads, in one-letter code: MSENTTHFGFRTVPEHEKANMVRAVFDSVAGKYDVMNDLMSIGIHRLWKRIAVDLAHVRSGEKVLDLAGGTGDLTALFRKRVGARGFVVLSDINAEMLRRGRDRIIDDGLAESVAYAQIDAEKLPFPHDSFDCISIGFGLRNVTHKDKALNSMYRALKPGGRLIVLEFSEVHNELLRKAYDLYSFKVLPFLGKLVANDAESYRYLAESIRMHPNQEKLKAMMEKAGFERCEYFDLMQGIVAVHRGYKF.

S-adenosyl-L-methionine is bound by residues Thr71, Asp92, and Asp120–Ala121.

This sequence belongs to the class I-like SAM-binding methyltransferase superfamily. MenG/UbiE family.

It carries out the reaction a 2-demethylmenaquinol + S-adenosyl-L-methionine = a menaquinol + S-adenosyl-L-homocysteine + H(+). The catalysed reaction is a 2-methoxy-6-(all-trans-polyprenyl)benzene-1,4-diol + S-adenosyl-L-methionine = a 5-methoxy-2-methyl-3-(all-trans-polyprenyl)benzene-1,4-diol + S-adenosyl-L-homocysteine + H(+). The protein operates within quinol/quinone metabolism; menaquinone biosynthesis; menaquinol from 1,4-dihydroxy-2-naphthoate: step 2/2. It participates in cofactor biosynthesis; ubiquinone biosynthesis. In terms of biological role, methyltransferase required for the conversion of demethylmenaquinol (DMKH2) to menaquinol (MKH2) and the conversion of 2-polyprenyl-6-methoxy-1,4-benzoquinol (DDMQH2) to 2-polyprenyl-3-methyl-6-methoxy-1,4-benzoquinol (DMQH2). The sequence is that of Ubiquinone/menaquinone biosynthesis C-methyltransferase UbiE from Methylococcus capsulatus (strain ATCC 33009 / NCIMB 11132 / Bath).